A 487-amino-acid polypeptide reads, in one-letter code: Phosphoglucosamine mutase (487 aa).

The Phosphoserine intermediate role is filled by serine 134. The Mg(2+) site is built by serine 134, aspartate 277, aspartate 279, and aspartate 281. A Phosphoserine modification is found at serine 134.

It belongs to the phosphohexose mutase family. Mg(2+) is required as a cofactor. Activated by phosphorylation.

The catalysed reaction is alpha-D-glucosamine 1-phosphate = D-glucosamine 6-phosphate. Catalyzes the conversion of glucosamine-6-phosphate to glucosamine-1-phosphate. This is Phosphoglucosamine mutase from Gloeothece citriformis (strain PCC 7424) (Cyanothece sp. (strain PCC 7424)).